The primary structure comprises 410 residues: 2-hydroxy-5-methyl-1-naphthoate 7-hydroxylase (410 aa).

C350 serves as a coordination point for heme.

Belongs to the cytochrome P450 family. It depends on heme as a cofactor.

The catalysed reaction is 2-hydroxy-5-methyl-1-naphthoate + 2 reduced [2Fe-2S]-[ferredoxin] + O2 + 2 H(+) = 2,7-dihydroxy-5-methyl-1-naphthoate + 2 oxidized [2Fe-2S]-[ferredoxin] + H2O. The protein operates within antibiotic biosynthesis. Functionally, involved in the biosynthesis of the naphthoic acid (NA) moiety in the chromophore of the enedyine antitumor antibiotic neocarzinostatin (NCS). Catalyzes the hydroxylation at C-7 position of 2-hydroxy-5-methyl-1-naphthoate to yield 2,7-dihydroxy-5-methyl-1-naphthoate. The sequence is that of 2-hydroxy-5-methyl-1-naphthoate 7-hydroxylase from Streptomyces carzinostaticus.